Consider the following 732-residue polypeptide: Bromodomain-containing factor 1 (732 aa).

Residues 1 to 22 (MSETFPETNTPVQTPSTESFVN) show a composition bias toward polar residues. Disordered stretches follow at residues 1 to 207 (MSET…NLPE), 324 to 380 (TNVA…ETKP), 491 to 517 (NKPVPEPTPQNSDVSDREYSSEEEDNV), 556 to 600 (REQQ…TPPQ), and 700 to 732 (VNGQQGSDNGFMKVVNQEESSEDEASSESSEEE). Low complexity predominate over residues 37-51 (SQDSDSNQQSSHQEP). The span at 89-100 (ASQTGVIQTEVS) shows a compositional bias: polar residues. The segment covering 137 to 147 (EAPEENPQEEV) has biased composition (acidic residues). Positions 206-315 (PENPIPQHQA…AQFEKLMVKV (110 aa)) constitute a Bromo 1 domain. The segment covering 327 to 338 (AEATSVATSPTT) has biased composition (polar residues). Residues 370-380 (KSKELPYETKP) show a composition bias toward basic and acidic residues. Residues 383–492 (KKVAAELRFC…AVFDKKWANK (110 aa)) enclose the Bromo 2 domain. Positions 529 to 569 (AIQVMENQIIRMRKELDELKKEHLKKLREQQAARKKKKQQK) form a coiled coil. The segment covering 561–579 (ARKKKKQQKGKRRAPKAKH) has biased composition (basic residues). The segment covering 590–600 (PPEPPKLTPPQ) has biased composition (pro residues). The 80-residue stretch at 593–672 (PPKLTPPQPV…GDKALKNSAG (80 aa)) folds into the NET domain. A compositionally biased stretch (acidic residues) spans 718–732 (ESSEDEASSESSEEE).

It belongs to the BET family.

It localises to the nucleus. In terms of biological role, transcription factor involved in the expression of a broad class of genes including snRNAs. Required for sporulation and DNA-damage repair. Prevents the spreading of SIR silencing at telomeres and protects histone H4, but not H3, from deacetylation. The chain is Bromodomain-containing factor 1 (BDF1) from Candida albicans (strain SC5314 / ATCC MYA-2876) (Yeast).